A 391-amino-acid chain; its full sequence is Phosphoglycerate kinase (391 aa).

Substrate-binding positions include 21 to 23 (DLN), R36, 59 to 62 (HLGR), R113, and R146. ATP contacts are provided by residues K197, E319, and 345–348 (GGDT).

This sequence belongs to the phosphoglycerate kinase family. As to quaternary structure, monomer.

The protein localises to the cytoplasm. It carries out the reaction (2R)-3-phosphoglycerate + ATP = (2R)-3-phospho-glyceroyl phosphate + ADP. It functions in the pathway carbohydrate degradation; glycolysis; pyruvate from D-glyceraldehyde 3-phosphate: step 2/5. This is Phosphoglycerate kinase from Shewanella sp. (strain W3-18-1).